The following is a 641-amino-acid chain: Sodium-dependent nutrient amino acid transporter 1 (641 aa).

Positions 1–36 (MELKGVQPSNGSANGNGTTNAASTEKTDAEKHTPER) are disordered. The Cytoplasmic segment spans residues 1–38 (MELKGVQPSNGSANGNGTTNAASTEKTDAEKHTPERTN). A compositionally biased stretch (low complexity) spans 9–24 (SNGSANGNGTTNAAST). The segment covering 25 to 35 (EKTDAEKHTPE) has biased composition (basic and acidic residues). 3 consecutive transmembrane segments (helical) span residues 39–59 (WGNG…LGNV), 72–92 (GAFL…MYYL), and 109–129 (SVVP…ICII). 2 N-linked (GlcNAc...) asparagine glycosylation sites follow: asparagine 183 and asparagine 188. A run of 9 helical transmembrane segments spans residues 229-249 (PDWK…LVIM), 258-278 (AAYF…IRAV), 307-327 (AVVQ…MFAS), 341-361 (IVTT…FAIL), 401-421 (LFSV…IVAL), 441-461 (VALI…TPGG), 474-494 (TYVV…VYGL), 516-536 (CWSF…MVTI), and 552-572 (IAGW…GLWY).

The protein belongs to the sodium:neurotransmitter symporter (SNF) (TC 2.A.22) family.

The protein localises to the membrane. Functionally, unusual broad substrate spectrum amino acid:sodium cotransporter that promotes absorption of the D isomers of essential amino acids. Neutral amino acids are the preferred substrates, especially methionine and phenylalanine. The polypeptide is Sodium-dependent nutrient amino acid transporter 1 (Drosophila erecta (Fruit fly)).